Here is a 1197-residue protein sequence, read N- to C-terminus: Pleckstrin homology domain-containing family A member 7 (1197 aa).

2 consecutive WW domains span residues 8 to 41 (DTLP…HPRT) and 53 to 86 (SDLP…HPVT). Residues 98–148 (LQDQPGGRMLKQPSSTISEASTTVTTSTVDSTSGSKGSRSSGRVHSFGKRD) form a disordered region. Over residues 111–140 (SSTISEASTTVTTSTVDSTSGSKGSRSSGR) the composition is skewed to low complexity. In terms of domain architecture, PH spans 158-257 (PVVVRGWLYK…WVRAMNQAAL (100 aa)). Disordered stretches follow at residues 348-384 (PGST…NGMP), 423-467 (LVST…QLPS), and 508-577 (FRHG…TVRP). Over residues 528–546 (VSSTRNNSDVSRSVSVPPT) the composition is skewed to low complexity. Basic and acidic residues predominate over residues 568 to 577 (TPAERVTVRP). A coiled-coil region spans residues 678-799 (DKILQELEFR…RIEDVMTGLS (122 aa)). 2 disordered regions span residues 830–928 (SRCM…SYSN) and 1032–1064 (HQRA…SDPG). Residues 913–924 (RQSDERKRDRES) are compositionally biased toward basic and acidic residues. A coiled-coil region spans residues 1016 to 1044 (QRVRMSVEEQLERMKRHQRALVRERKRNL). The span at 1032-1043 (HQRALVRERKRN) shows a compositional bias: basic residues.

The protein localises to the cell junction. It is found in the adherens junction. It localises to the cytoplasm. The protein resides in the cytoskeleton. Its subcellular location is the microtubule organizing center. The protein localises to the centrosome. Required for zonula adherens biogenesis and maintenance. The sequence is that of Pleckstrin homology domain-containing family A member 7 (plekha7) from Danio rerio (Zebrafish).